We begin with the raw amino-acid sequence, 81 residues long: Acyl carrier protein (81 aa).

Residues 3–78 (QEIFDKIKNI…EAVNIIAEKT (76 aa)) enclose the Carrier domain. Serine 38 carries the post-translational modification O-(pantetheine 4'-phosphoryl)serine.

It belongs to the acyl carrier protein (ACP) family. 4'-phosphopantetheine is transferred from CoA to a specific serine of apo-ACP by AcpS. This modification is essential for activity because fatty acids are bound in thioester linkage to the sulfhydryl of the prosthetic group.

It localises to the cytoplasm. It participates in lipid metabolism; fatty acid biosynthesis. In terms of biological role, carrier of the growing fatty acid chain in fatty acid biosynthesis. The sequence is that of Acyl carrier protein from Picosynechococcus sp. (strain ATCC 27264 / PCC 7002 / PR-6) (Agmenellum quadruplicatum).